A 1756-amino-acid polypeptide reads, in one-letter code: Periplakin (1756 aa).

Position 14 is a phosphoserine (S14). Coiled-coil stretches lie at residues 16–125 (TVQT…KQIY) and 188–389 (KEQN…QQVV). Spectrin repeat units follow at residues 216–317 (QDYM…SHLK), 323–485 (HQFH…RTLQ), 505–612 (RQLL…EKVD), and 733–861 (EHFH…QNLE). Residues 399–455 (LKPIPVEALCDFEGEQGLISRGYSYTLQKNNGESWELMDSAGNKLIAPAVCFVIPPT) form the SH3 domain. S465 carries the phosphoserine modification. Coiled coils occupy residues 585 to 820 (LLRT…GRRS) and 886 to 1645 (DSGV…SVAV). Phosphoserine occurs at positions 887, 949, 1584, and 1657. The tract at residues 1557 to 1756 (ELDFLREENH…ELAVLVSGQK (200 aa)) is interacts with BFSP2 and VIM. 2 Plectin repeats span residues 1651–1685 (ENHL…WNMF) and 1700–1735 (VKGP…PAQY).

It belongs to the plakin or cytolinker family. As to quaternary structure, homodimer or a heterodimer with EVPL. Found in a complex composed of PPL (via C-terminal linker domain), BFSP1 and BFSP2 in the retinal lens. Within the complex interacts (via C-terminal linker domain) with BFSP2. Interacts with VIM. Binds to the PH domain of AKT1. Interacts with FCGR1A. May interact with PPHLN1. As to expression, expressed in stratified squamous epithelia and in some other epithelia.

It is found in the cell junction. The protein localises to the desmosome. The protein resides in the cytoplasm. It localises to the cytoskeleton. Its subcellular location is the cell membrane. Its function is as follows. Component of the cornified envelope of keratinocytes. May link the cornified envelope to desmosomes and intermediate filaments. May act as a localization signal in PKB/AKT-mediated signaling. The sequence is that of Periplakin (PPL) from Homo sapiens (Human).